A 166-amino-acid chain; its full sequence is Large ribosomal subunit protein uL10 (166 aa).

Belongs to the universal ribosomal protein uL10 family. In terms of assembly, part of the ribosomal stalk of the 50S ribosomal subunit. The N-terminus interacts with L11 and the large rRNA to form the base of the stalk. The C-terminus forms an elongated spine to which L12 dimers bind in a sequential fashion forming a multimeric L10(L12)X complex.

Functionally, forms part of the ribosomal stalk, playing a central role in the interaction of the ribosome with GTP-bound translation factors. In Staphylococcus haemolyticus (strain JCSC1435), this protein is Large ribosomal subunit protein uL10.